The following is a 208-amino-acid chain: Holliday junction resolvase RecU (208 aa).

The interval 1–28 is disordered; the sequence is MNYPNGKPYSKNKPLDGRKSSPFSSNIE. Mg(2+) is bound by residues Thr-87, Asp-89, Glu-102, and Gln-121.

It belongs to the RecU family. The cofactor is Mg(2+).

Its subcellular location is the cytoplasm. It catalyses the reaction Endonucleolytic cleavage at a junction such as a reciprocal single-stranded crossover between two homologous DNA duplexes (Holliday junction).. Functionally, endonuclease that resolves Holliday junction intermediates in genetic recombination. Cleaves mobile four-strand junctions by introducing symmetrical nicks in paired strands. Promotes annealing of linear ssDNA with homologous dsDNA. Required for DNA repair, homologous recombination and chromosome segregation. The polypeptide is Holliday junction resolvase RecU (Staphylococcus epidermidis (strain ATCC 12228 / FDA PCI 1200)).